Reading from the N-terminus, the 269-residue chain is [LysW]-aminoadipate kinase (269 aa).

Lys-5–Gly-8 is an ATP binding site. Arg-64 lines the substrate pocket. Position 78 (Tyr-78) interacts with ATP. A substrate-binding site is contributed by Asn-168.

Belongs to the acetylglutamate kinase family. LysZ subfamily.

It localises to the cytoplasm. The catalysed reaction is [amino-group carrier protein]-C-terminal-N-(1,4-dicarboxybutan-1-yl)-L-glutamine + ATP = [amino-group carrier protein]-C-terminal-N-(1-carboxy-5-phosphooxy-5-oxopentan-1-yl)-L-glutamine + ADP. It participates in amino-acid biosynthesis; L-lysine biosynthesis via AAA pathway; L-lysine from L-alpha-aminoadipate (Thermus route): step 2/5. Catalyzes the phosphorylation of LysW-gamma-alpha-aminoadipate. Does not phosphorylate N-acetyl-glutamate. The polypeptide is [LysW]-aminoadipate kinase (Thermus thermophilus (strain ATCC BAA-163 / DSM 7039 / HB27)).